The chain runs to 213 residues: Thiamine-phosphate synthase (213 aa).

4-amino-2-methyl-5-(diphosphooxymethyl)pyrimidine is bound by residues 40–44 (QFREK) and Asn75. Asp76 and Asp95 together coordinate Mg(2+). Ser113 provides a ligand contact to 4-amino-2-methyl-5-(diphosphooxymethyl)pyrimidine. 139–141 (TPS) contributes to the 2-[(2R,5Z)-2-carboxy-4-methylthiazol-5(2H)-ylidene]ethyl phosphate binding site. Lys142 provides a ligand contact to 4-amino-2-methyl-5-(diphosphooxymethyl)pyrimidine. Residues Gly171 and 191-192 (IS) contribute to the 2-[(2R,5Z)-2-carboxy-4-methylthiazol-5(2H)-ylidene]ethyl phosphate site.

The protein belongs to the thiamine-phosphate synthase family. Mg(2+) is required as a cofactor.

The enzyme catalyses 2-[(2R,5Z)-2-carboxy-4-methylthiazol-5(2H)-ylidene]ethyl phosphate + 4-amino-2-methyl-5-(diphosphooxymethyl)pyrimidine + 2 H(+) = thiamine phosphate + CO2 + diphosphate. It catalyses the reaction 2-(2-carboxy-4-methylthiazol-5-yl)ethyl phosphate + 4-amino-2-methyl-5-(diphosphooxymethyl)pyrimidine + 2 H(+) = thiamine phosphate + CO2 + diphosphate. The catalysed reaction is 4-methyl-5-(2-phosphooxyethyl)-thiazole + 4-amino-2-methyl-5-(diphosphooxymethyl)pyrimidine + H(+) = thiamine phosphate + diphosphate. The protein operates within cofactor biosynthesis; thiamine diphosphate biosynthesis; thiamine phosphate from 4-amino-2-methyl-5-diphosphomethylpyrimidine and 4-methyl-5-(2-phosphoethyl)-thiazole: step 1/1. In terms of biological role, condenses 4-methyl-5-(beta-hydroxyethyl)thiazole monophosphate (THZ-P) and 2-methyl-4-amino-5-hydroxymethyl pyrimidine pyrophosphate (HMP-PP) to form thiamine monophosphate (TMP). The polypeptide is Thiamine-phosphate synthase (Staphylococcus aureus (strain JH1)).